The chain runs to 37 residues: Large ribosomal subunit protein bL36 (37 aa).

It belongs to the bacterial ribosomal protein bL36 family.

This is Large ribosomal subunit protein bL36 from Nocardioides sp. (strain ATCC BAA-499 / JS614).